Here is a 299-residue protein sequence, read N- to C-terminus: Fluorinase (299 aa).

Residues Asp15, 20–22 (DDS), Tyr76, Ser157, Asp210, Asn215, 269–270 (SR), and 277–279 (RNA) contribute to the S-adenosyl-L-methionine site.

Belongs to the SAM hydrolase / SAM-dependent halogenase family.

It catalyses the reaction fluoride + S-adenosyl-L-methionine = 5'-deoxy-5'-fluoroadenosine + L-methionine. Activity is not severely affected by most metal ions (Mg(2+), Mn(2+), Co(2+) and Fe(2+)), but both Cu(2+) and Zn(2+) are strong inhibitors. Its function is as follows. Catalyzes the formation of a C-F bond by combining S-adenosyl-L-methionine (SAM) and fluoride to generate 5'-fluoro-5'-deoxyadenosine (5'-FDA) and L-methionine. This Actinopolyspora mzabensis protein is Fluorinase.